Reading from the N-terminus, the 424-residue chain is Protein CLP1 homolog 5 (424 aa).

Residues glutamate 16, threonine 56, and 124–129 contribute to the ATP site; that span reads DSGKST.

It belongs to the Clp1 family. Clp1 subfamily. In terms of assembly, forms a complex with cleavage and polyadenylation specificity factor (CPSF) subunits PCFS1, FIPS3 and CPSF30.

The protein resides in the nucleus. In terms of biological role, required for endonucleolytic cleavage during polyadenylation-dependent pre-mRNA 3'-end formation. This chain is Protein CLP1 homolog 5, found in Arabidopsis thaliana (Mouse-ear cress).